The chain runs to 408 residues: 1-deoxy-D-xylulose 5-phosphate reductoisomerase (408 aa).

Residues T19, G20, S21, I22, G45, N47, and N130 each coordinate NADPH. Position 131 (K131) interacts with 1-deoxy-D-xylulose 5-phosphate. Residue E132 coordinates NADPH. Position 156 (D156) interacts with Mn(2+). 1-deoxy-D-xylulose 5-phosphate contacts are provided by S157, E158, S182, and H205. Residue E158 coordinates Mn(2+). Residue G211 participates in NADPH binding. 1-deoxy-D-xylulose 5-phosphate contacts are provided by S218, N223, K224, and E227. Mn(2+) is bound at residue E227.

Belongs to the DXR family. Requires Mg(2+) as cofactor. The cofactor is Mn(2+).

The catalysed reaction is 2-C-methyl-D-erythritol 4-phosphate + NADP(+) = 1-deoxy-D-xylulose 5-phosphate + NADPH + H(+). Its pathway is isoprenoid biosynthesis; isopentenyl diphosphate biosynthesis via DXP pathway; isopentenyl diphosphate from 1-deoxy-D-xylulose 5-phosphate: step 1/6. Catalyzes the NADPH-dependent rearrangement and reduction of 1-deoxy-D-xylulose-5-phosphate (DXP) to 2-C-methyl-D-erythritol 4-phosphate (MEP). The protein is 1-deoxy-D-xylulose 5-phosphate reductoisomerase of Gluconobacter oxydans (strain 621H) (Gluconobacter suboxydans).